A 269-amino-acid polypeptide reads, in one-letter code: GTP cyclohydrolase FolE2 (269 aa).

It belongs to the GTP cyclohydrolase IV family.

It carries out the reaction GTP + H2O = 7,8-dihydroneopterin 3'-triphosphate + formate + H(+). It functions in the pathway cofactor biosynthesis; 7,8-dihydroneopterin triphosphate biosynthesis; 7,8-dihydroneopterin triphosphate from GTP: step 1/1. Converts GTP to 7,8-dihydroneopterin triphosphate. The sequence is that of GTP cyclohydrolase FolE2 from Burkholderia vietnamiensis (strain G4 / LMG 22486) (Burkholderia cepacia (strain R1808)).